A 410-amino-acid polypeptide reads, in one-letter code: LL-diaminopimelate aminotransferase (410 aa).

Residues Y15 and G42 each contribute to the substrate site. Residues Y72, 108-109 (AK), Y132, N187, Y218, and 246-248 (SFS) contribute to the pyridoxal 5'-phosphate site. Positions 109, 132, and 187 each coordinate substrate. Position 249 is an N6-(pyridoxal phosphate)lysine (K249). Positions 257 and 292 each coordinate pyridoxal 5'-phosphate. Substrate-binding residues include N292 and R388.

The protein belongs to the class-I pyridoxal-phosphate-dependent aminotransferase family. LL-diaminopimelate aminotransferase subfamily. As to quaternary structure, homodimer. Requires pyridoxal 5'-phosphate as cofactor.

The catalysed reaction is (2S,6S)-2,6-diaminopimelate + 2-oxoglutarate = (S)-2,3,4,5-tetrahydrodipicolinate + L-glutamate + H2O + H(+). It functions in the pathway amino-acid biosynthesis; L-lysine biosynthesis via DAP pathway; LL-2,6-diaminopimelate from (S)-tetrahydrodipicolinate (aminotransferase route): step 1/1. Its function is as follows. Involved in the synthesis of meso-diaminopimelate (m-DAP or DL-DAP), required for both lysine and peptidoglycan biosynthesis. Catalyzes the direct conversion of tetrahydrodipicolinate to LL-diaminopimelate. The polypeptide is LL-diaminopimelate aminotransferase (Picosynechococcus sp. (strain ATCC 27264 / PCC 7002 / PR-6) (Agmenellum quadruplicatum)).